The primary structure comprises 215 residues: Probable nicotinate-nucleotide adenylyltransferase (215 aa).

This sequence belongs to the NadD family.

The enzyme catalyses nicotinate beta-D-ribonucleotide + ATP + H(+) = deamido-NAD(+) + diphosphate. It participates in cofactor biosynthesis; NAD(+) biosynthesis; deamido-NAD(+) from nicotinate D-ribonucleotide: step 1/1. In terms of biological role, catalyzes the reversible adenylation of nicotinate mononucleotide (NaMN) to nicotinic acid adenine dinucleotide (NaAD). This chain is Probable nicotinate-nucleotide adenylyltransferase, found in Gluconacetobacter diazotrophicus (strain ATCC 49037 / DSM 5601 / CCUG 37298 / CIP 103539 / LMG 7603 / PAl5).